Here is a 263-residue protein sequence, read N- to C-terminus: MRDSTPLIHPTAVIDPSATLADDVRVGAFSLIGADVQIGAGTEVGPHCSIHGPTRIGRNNRFIGHAAIGGEPQDKKYAGERTELVIGDGNVIREFVTINRGTGGGGGITVVGNDNWMLAYTHVAHDCHVGNHCVFSNNTTLAGHVTVGDYVIISGFAGAHQFCRIGAHAFLGMGALTNGDVPPFTMVGSESLGRPRGINSEGLKRRGFDAERITAIKRAYRTLYVAGLPLADAKLQLAEQAKSSDDVRGMLEFIEAAERPLLR.

This sequence belongs to the transferase hexapeptide repeat family. LpxA subfamily. Homotrimer.

The protein localises to the cytoplasm. It catalyses the reaction a (3R)-hydroxyacyl-[ACP] + UDP-N-acetyl-alpha-D-glucosamine = a UDP-3-O-[(3R)-3-hydroxyacyl]-N-acetyl-alpha-D-glucosamine + holo-[ACP]. It participates in glycolipid biosynthesis; lipid IV(A) biosynthesis; lipid IV(A) from (3R)-3-hydroxytetradecanoyl-[acyl-carrier-protein] and UDP-N-acetyl-alpha-D-glucosamine: step 1/6. Functionally, involved in the biosynthesis of lipid A, a phosphorylated glycolipid that anchors the lipopolysaccharide to the outer membrane of the cell. This Xanthomonas axonopodis pv. citri (strain 306) protein is Acyl-[acyl-carrier-protein]--UDP-N-acetylglucosamine O-acyltransferase.